The chain runs to 279 residues: MSNAPYDPATEGARMNFKGRMSYGDYLMLDRLLDAQAPLSSAHDELLFIIQHQTSELWMKLAIHEIKAAMAAIAKDDVQPAFKMLARVSRIFEQLNGAWDVLRTMTPSEYTLFRDKLGESSGFQSFQYRSIEFLLGNRNLAMLRPHAHHPELTAELEAILAKPSLYDEALKLLARRGFFIGADGQRTDWRGTRSESPEVAAAWTSVYRDPQRHWELYELAEKLVDFEDYFRRWRFNHVTTVERIIGFKTGTGGTSGVNYLRKMLEIVLFPELWKLRTGL.

Substrate-binding positions include 48–52 (FIIQH), Tyr110, and Arg114. Residue His237 participates in heme binding. A substrate-binding site is contributed by Thr251.

This sequence belongs to the tryptophan 2,3-dioxygenase family. In terms of assembly, homotetramer. Heme serves as cofactor.

The catalysed reaction is L-tryptophan + O2 = N-formyl-L-kynurenine. It functions in the pathway amino-acid degradation; L-tryptophan degradation via kynurenine pathway; L-kynurenine from L-tryptophan: step 1/2. In terms of biological role, heme-dependent dioxygenase that catalyzes the oxidative cleavage of the L-tryptophan (L-Trp) pyrrole ring and converts L-tryptophan to N-formyl-L-kynurenine. Catalyzes the oxidative cleavage of the indole moiety. The polypeptide is Tryptophan 2,3-dioxygenase (Bradyrhizobium sp. (strain BTAi1 / ATCC BAA-1182)).